Here is a 612-residue protein sequence, read N- to C-terminus: Bile salt-activated lipase (612 aa).

The N-terminal stretch at 1-20 (MGRLEVLFLGLTCCLAAACA) is a signal peptide. A disulfide bridge connects residues Cys-84 and Cys-100. N-linked (GlcNAc...) asparagine glycosylation occurs at Asn-207. Residue Ser-214 is the Acyl-ester intermediate of the active site. A disulfide bond links Cys-266 and Cys-277. Catalysis depends on charge relay system residues Asp-340 and His-455. The interval 553-612 (VGDHTPPEDDSEAAPVPPTDDSQGGPVPPTDDSQTTPVPPTDNSQAGDSVEAQMPGPIGF) is disordered. 4 tandem repeats follow at residues 556–566 (HTPPEDDSEAA), 567–577 (PVPPTDDSQGG), 578–588 (PVPPTDDSQTT), and 589–599 (PVPPTDNSQAG). The 4 X 11 AA tandem repeats, O-glycosylated region stretch occupies residues 556–599 (HTPPEDDSEAAPVPPTDDSQGGPVPPTDDSQTTPVPPTDNSQAG). Residues 583–599 (DDSQTTPVPPTDNSQAG) show a composition bias toward polar residues.

It belongs to the type-B carboxylesterase/lipase family. In terms of assembly, interacts with CLC. As to expression, synthesized primarily in the pancreas and then transported to the intestine.

Its subcellular location is the secreted. The catalysed reaction is a triacylglycerol + H2O = a diacylglycerol + a fatty acid + H(+). It catalyses the reaction 1,2,3-tri-(9Z-octadecenoyl)-glycerol + H2O = di-(9Z)-octadecenoylglycerol + (9Z)-octadecenoate + H(+). It carries out the reaction 1,2,3-trioctanoylglycerol + H2O = dioctanoylglycerol + octanoate + H(+). The enzyme catalyses a sterol ester + H2O = a sterol + a fatty acid + H(+). The catalysed reaction is cholesteryl (9Z-octadecenoate) + H2O = cholesterol + (9Z)-octadecenoate + H(+). It catalyses the reaction an acetyl ester + H2O = an aliphatic alcohol + acetate + H(+). It carries out the reaction a butanoate ester + H2O = an aliphatic alcohol + butanoate + H(+). The enzyme catalyses 9-hexadecanoyloxy-octadecanoate + H2O = 9-hydroxy-octadecanoate + hexadecanoate + H(+). The catalysed reaction is 9-(9Z-octadecenoyloxy)-octadecanoate + H2O = 9-hydroxy-octadecanoate + (9Z)-octadecenoate + H(+). It catalyses the reaction 1-hexadecanoyl-sn-glycero-3-phosphocholine + H2O = sn-glycerol 3-phosphocholine + hexadecanoate + H(+). It carries out the reaction 12-hexadecanoyloxy-octadecanoate + H2O = 12-hydroxyoctadecanoate + hexadecanoate + H(+). The enzyme catalyses 12-(9Z-octadecenoyloxy)-octadecanoate + H2O = 12-hydroxyoctadecanoate + (9Z)-octadecenoate + H(+). The catalysed reaction is 13-(9Z-octadecenoyloxy)-octadecanoate + H2O = 13-hydroxy-octadecanoate + (9Z)-octadecenoate + H(+). It catalyses the reaction 9-(9Z-hexadecenoyloxy)-octadecanoate + H2O = (9Z)-hexadecenoate + 9-hydroxy-octadecanoate + H(+). It carries out the reaction 12-(9Z-hexadecenoyloxy)-octadecanoate + H2O = 12-hydroxyoctadecanoate + (9Z)-hexadecenoate + H(+). The enzyme catalyses 13-(9Z-hexadecenoyloxy)-octadecanoate + H2O = 13-hydroxy-octadecanoate + (9Z)-hexadecenoate + H(+). The catalysed reaction is 12-octadecanoyloxy-octadecanoate + H2O = 12-hydroxyoctadecanoate + octadecanoate + H(+). It catalyses the reaction 13-octadecanoyloxy-octadecanoate + H2O = 13-hydroxy-octadecanoate + octadecanoate + H(+). It carries out the reaction 5-(9Z-hexadecenoyloxy)-octadecanoate + H2O = 5-hydroxy-octadecanoate + (9Z)-hexadecenoate + H(+). The enzyme catalyses 9-octadecanoyloxy-octadecanoate + H2O = 9-hydroxy-octadecanoate + octadecanoate + H(+). With respect to regulation, activated by bile salts such as sodium taurocholate. Its function is as follows. Catalyzes the hydrolysis of a wide range of substrates including cholesteryl esters, phospholipids, lysophospholipids, di- and tri-acylglycerols, and fatty acid esters of hydroxy fatty acids (FAHFA). Preferentially hydrolyzes FAHFAs with the ester bond further away from the carboxylate. Unsaturated FAHFAs are hydrolyzed more quickly than saturated FAHFAs. Has an essential role in the complete digestion of dietary lipids and their intestinal absorption, along with the absorption of fat-soluble vitamins. The polypeptide is Bile salt-activated lipase (Cel) (Rattus norvegicus (Rat)).